We begin with the raw amino-acid sequence, 322 residues long: o-succinylbenzoate synthase (322 aa).

Catalysis depends on lysine 136, which acts as the Proton donor. Mg(2+) contacts are provided by aspartate 165, glutamate 194, and aspartate 219. Catalysis depends on lysine 243, which acts as the Proton acceptor.

This sequence belongs to the mandelate racemase/muconate lactonizing enzyme family. MenC type 1 subfamily. As to quaternary structure, monomer. A divalent metal cation is required as a cofactor.

It catalyses the reaction (1R,6R)-6-hydroxy-2-succinyl-cyclohexa-2,4-diene-1-carboxylate = 2-succinylbenzoate + H2O. It participates in quinol/quinone metabolism; 1,4-dihydroxy-2-naphthoate biosynthesis; 1,4-dihydroxy-2-naphthoate from chorismate: step 4/7. Its pathway is cofactor biosynthesis; phylloquinone biosynthesis. Converts 2-succinyl-6-hydroxy-2,4-cyclohexadiene-1-carboxylate (SHCHC) to 2-succinylbenzoate (OSB). Does not show N-succinylamino acid racemase (NSAR) activity with N-succinyl-L-phenylglycine as substrate. The polypeptide is o-succinylbenzoate synthase (Thermosynechococcus vestitus (strain NIES-2133 / IAM M-273 / BP-1)).